The sequence spans 202 residues: Uclacyanin-2 (202 aa).

Residues 1 to 29 (MAMNGLSKMAVAAATALLLVLTIVPGAVA) form the signal peptide. The 97-residue stretch at 30–126 (VTYTIEWTTG…GMKLAVNVVA (97 aa)) folds into the Phytocyanin domain. His65 serves as a coordination point for Cu cation. The N-linked (GlcNAc...) asparagine glycan is linked to Asn86. Cu cation is bound by residues Cys106, His111, and Met118. The disordered stretch occupies residues 129–181 (AGPPATPTPPSSTPGTPTTPESPPSGGSPTPTTPTPGAGSTSPPPPPKASGAS). A compositionally biased stretch (low complexity) spans 141–169 (TPGTPTTPESPPSGGSPTPTTPTPGAGST). The GPI-anchor amidated serine moiety is linked to residue Ser178. The propeptide at 179–202 (GASKGVMSYVLVGVSMVLGYGLWM) is removed in mature form.

It is found in the cell membrane. In terms of biological role, probably acts as an electron carrier involved in oxygen activation and/or lignin formation. The polypeptide is Uclacyanin-2 (Arabidopsis thaliana (Mouse-ear cress)).